The primary structure comprises 405 residues: Phosphopentomutase (405 aa).

Mn(2+) is bound by residues D10, D303, H308, D344, H345, and H356.

This sequence belongs to the phosphopentomutase family. Mn(2+) serves as cofactor.

The protein localises to the cytoplasm. The catalysed reaction is 2-deoxy-alpha-D-ribose 1-phosphate = 2-deoxy-D-ribose 5-phosphate. The enzyme catalyses alpha-D-ribose 1-phosphate = D-ribose 5-phosphate. It functions in the pathway carbohydrate degradation; 2-deoxy-D-ribose 1-phosphate degradation; D-glyceraldehyde 3-phosphate and acetaldehyde from 2-deoxy-alpha-D-ribose 1-phosphate: step 1/2. Its function is as follows. Isomerase that catalyzes the conversion of deoxy-ribose 1-phosphate (dRib-1-P) and ribose 1-phosphate (Rib-1-P) to deoxy-ribose 5-phosphate (dRib-5-P) and ribose 5-phosphate (Rib-5-P), respectively. The protein is Phosphopentomutase of Shewanella sediminis (strain HAW-EB3).